We begin with the raw amino-acid sequence, 188 residues long: UPF0340 protein BH3766 (188 aa).

This sequence belongs to the UPF0340 family.

In Halalkalibacterium halodurans (strain ATCC BAA-125 / DSM 18197 / FERM 7344 / JCM 9153 / C-125) (Bacillus halodurans), this protein is UPF0340 protein BH3766.